The chain runs to 296 residues: Glycine N-acyltransferase (296 aa).

Position 16 is an N6-acetyllysine; alternate (Lys16). Lys16 bears the N6-succinyllysine; alternate mark. An N6-acetyllysine modification is found at Lys113. N6-acetyllysine; alternate is present on residues Lys127 and Lys142. An N6-succinyllysine; alternate mark is found at Lys127 and Lys142. Residue Lys159 is modified to N6-acetyllysine. Lys169 carries the N6-succinyllysine modification. Residues Lys183 and Lys256 each carry the N6-acetyllysine; alternate modification. N6-succinyllysine; alternate is present on residues Lys183 and Lys256. An N6-succinyllysine modification is found at Lys267.

The protein belongs to the glycine N-acyltransferase family.

The protein localises to the mitochondrion. It carries out the reaction an acyl-CoA + glycine = an N-acylglycine + CoA + H(+). It catalyses the reaction benzoyl-CoA + glycine = N-benzoylglycine + CoA + H(+). Mitochondrial acyltransferase which transfers an acyl group to the N-terminus of glycine and glutamine, although much less efficiently. Can conjugate a multitude of substrates to form a variety of N-acylglycines, thereby detoxify xenobiotics, such as benzoic acid or salicylic acid, and endogenous organic acids, such as isovaleric acid. The protein is Glycine N-acyltransferase (Glyat) of Rattus norvegicus (Rat).